The primary structure comprises 565 residues: Deoxyribodipyrimidine photo-lyase, mitochondrial (565 aa).

The 152-residue stretch at 75–226 (STVMHWFRND…QLKYYHDSCI (152 aa)) folds into the Photolyase/cryptochrome alpha/beta domain. Residues Y326 and 338-342 (TSGLS) contribute to the FAD site. Interaction with DNA regions lie at residues 384–391 (EVAWRDFY) and 451–452 (NR). 482 to 484 (DGD) provides a ligand contact to FAD. Q514 provides a ligand contact to DNA.

Belongs to the DNA photolyase class-1 family. As to quaternary structure, monomer. FAD is required as a cofactor. The cofactor is (6R)-5,10-methylene-5,6,7,8-tetrahydrofolate.

The protein resides in the nucleus. Its subcellular location is the mitochondrion. The enzyme catalyses cyclobutadipyrimidine (in DNA) = 2 pyrimidine residues (in DNA).. In terms of biological role, involved in repair of UV radiation-induced DNA damage. Catalyzes the light-dependent monomerization (300-600 nm) of cyclobutyl pyrimidine dimers (in cis-syn configuration), which are formed between adjacent bases on the same DNA strand upon exposure to ultraviolet radiation. In Saccharomyces cerevisiae (strain ATCC 204508 / S288c) (Baker's yeast), this protein is Deoxyribodipyrimidine photo-lyase, mitochondrial (PHR1).